We begin with the raw amino-acid sequence, 156 residues long: Large ribosomal subunit protein bL9 (156 aa).

It belongs to the bacterial ribosomal protein bL9 family.

In terms of biological role, binds to the 23S rRNA. The polypeptide is Large ribosomal subunit protein bL9 (Treponema pallidum (strain Nichols)).